A 297-amino-acid polypeptide reads, in one-letter code: Tyrosine recombinase XerD (297 aa).

Residues M1–I87 form the Core-binding (CB) domain. One can recognise a Tyr recombinase domain in the interval K108–Q291. Active-site residues include R147, K171, H243, R246, and H269. Y278 serves as the catalytic O-(3'-phospho-DNA)-tyrosine intermediate.

This sequence belongs to the 'phage' integrase family. XerD subfamily. Forms a cyclic heterotetrameric complex composed of two molecules of XerC and two molecules of XerD.

The protein localises to the cytoplasm. Site-specific tyrosine recombinase, which acts by catalyzing the cutting and rejoining of the recombining DNA molecules. The XerC-XerD complex is essential to convert dimers of the bacterial chromosome into monomers to permit their segregation at cell division. It also contributes to the segregational stability of plasmids. The polypeptide is Tyrosine recombinase XerD (Oceanobacillus iheyensis (strain DSM 14371 / CIP 107618 / JCM 11309 / KCTC 3954 / HTE831)).